We begin with the raw amino-acid sequence, 91 residues long: Elongation factor 1-beta (91 aa).

It belongs to the EF-1-beta/EF-1-delta family.

Functionally, promotes the exchange of GDP for GTP in EF-1-alpha/GDP, thus allowing the regeneration of EF-1-alpha/GTP that could then be used to form the ternary complex EF-1-alpha/GTP/AAtRNA. This is Elongation factor 1-beta from Thermofilum pendens (strain DSM 2475 / Hrk 5).